We begin with the raw amino-acid sequence, 442 residues long: Glutamate synthase large subunit-like protein (442 aa).

A disordered region spans residues 108-133 (LGRGATASGTSTTTGDGGMTDEERGH). A compositionally biased stretch (low complexity) spans 109 to 121 (GRGATASGTSTTT).

Belongs to the glutamate synthase family.

This Rhizobium meliloti (strain 1021) (Ensifer meliloti) protein is Glutamate synthase large subunit-like protein (glxD).